We begin with the raw amino-acid sequence, 101 residues long: Urease subunit beta (101 aa).

This sequence belongs to the urease beta subunit family. In terms of assembly, heterotrimer of UreA (gamma), UreB (beta) and UreC (alpha) subunits. Three heterotrimers associate to form the active enzyme.

Its subcellular location is the cytoplasm. The catalysed reaction is urea + 2 H2O + H(+) = hydrogencarbonate + 2 NH4(+). The protein operates within nitrogen metabolism; urea degradation; CO(2) and NH(3) from urea (urease route): step 1/1. This is Urease subunit beta from Ruegeria pomeroyi (strain ATCC 700808 / DSM 15171 / DSS-3) (Silicibacter pomeroyi).